A 239-amino-acid chain; its full sequence is Uridylate kinase (239 aa).

Residue 13–16 participates in ATP binding; the sequence is KVSG. Gly-55 is a UMP binding site. ATP is bound by residues Gly-56 and Arg-60. UMP contacts are provided by residues Asp-75 and 136–143; that span reads TGNPFFTT. Positions 163, 164, 169, and 172 each coordinate ATP.

It belongs to the UMP kinase family. As to quaternary structure, homohexamer.

The protein localises to the cytoplasm. It carries out the reaction UMP + ATP = UDP + ADP. Its pathway is pyrimidine metabolism; CTP biosynthesis via de novo pathway; UDP from UMP (UMPK route): step 1/1. With respect to regulation, inhibited by UTP. Catalyzes the reversible phosphorylation of UMP to UDP. This chain is Uridylate kinase, found in Bartonella quintana (strain Toulouse) (Rochalimaea quintana).